A 417-amino-acid polypeptide reads, in one-letter code: Serine hydroxymethyltransferase (417 aa).

(6S)-5,6,7,8-tetrahydrofolate contacts are provided by residues L120 and 124–126; that span reads GHL. K229 carries the post-translational modification N6-(pyridoxal phosphate)lysine. Position 354–356 (354–356) interacts with (6S)-5,6,7,8-tetrahydrofolate; sequence SPF.

This sequence belongs to the SHMT family. In terms of assembly, homodimer. The cofactor is pyridoxal 5'-phosphate.

It is found in the cytoplasm. The enzyme catalyses (6R)-5,10-methylene-5,6,7,8-tetrahydrofolate + glycine + H2O = (6S)-5,6,7,8-tetrahydrofolate + L-serine. It participates in one-carbon metabolism; tetrahydrofolate interconversion. The protein operates within amino-acid biosynthesis; glycine biosynthesis; glycine from L-serine: step 1/1. Catalyzes the reversible interconversion of serine and glycine with tetrahydrofolate (THF) serving as the one-carbon carrier. This reaction serves as the major source of one-carbon groups required for the biosynthesis of purines, thymidylate, methionine, and other important biomolecules. Also exhibits THF-independent aldolase activity toward beta-hydroxyamino acids, producing glycine and aldehydes, via a retro-aldol mechanism. The protein is Serine hydroxymethyltransferase of Acinetobacter baumannii (strain AB307-0294).